Consider the following 301-residue polypeptide: ATP synthase gamma chain (301 aa).

Belongs to the ATPase gamma chain family. F-type ATPases have 2 components, CF(1) - the catalytic core - and CF(0) - the membrane proton channel. CF(1) has five subunits: alpha(3), beta(3), gamma(1), delta(1), epsilon(1). CF(0) has three main subunits: a, b and c.

It localises to the cell inner membrane. Produces ATP from ADP in the presence of a proton gradient across the membrane. The gamma chain is believed to be important in regulating ATPase activity and the flow of protons through the CF(0) complex. The protein is ATP synthase gamma chain of Bordetella pertussis (strain Tohama I / ATCC BAA-589 / NCTC 13251).